A 462-amino-acid polypeptide reads, in one-letter code: Glutamate--tRNA ligase 1 (462 aa).

Residues 8 to 18 (PSPTGYLHIGG) carry the 'HIGH' region motif. The 'KMSKS' region motif lies at 237–241 (KLSKR). Residue K240 participates in ATP binding.

Belongs to the class-I aminoacyl-tRNA synthetase family. Glutamate--tRNA ligase type 1 subfamily. Monomer.

The protein localises to the cytoplasm. The catalysed reaction is tRNA(Glu) + L-glutamate + ATP = L-glutamyl-tRNA(Glu) + AMP + diphosphate. Its function is as follows. Catalyzes the attachment of glutamate to tRNA(Glu) in a two-step reaction: glutamate is first activated by ATP to form Glu-AMP and then transferred to the acceptor end of tRNA(Glu). The sequence is that of Glutamate--tRNA ligase 1 from Sulfurimonas denitrificans (strain ATCC 33889 / DSM 1251) (Thiomicrospira denitrificans (strain ATCC 33889 / DSM 1251)).